The chain runs to 65 residues: Large ribosomal subunit protein bL35 (65 aa).

The protein belongs to the bacterial ribosomal protein bL35 family.

This Sodalis glossinidius (strain morsitans) protein is Large ribosomal subunit protein bL35.